The following is a 739-amino-acid chain: Lysyl oxidase homolog 3A (739 aa).

The signal sequence occupies residues 1-25 (MLRSELRDMVVAMVLWGILLPFCLS). SRCR domains are found at residues 38 to 139 (FRLA…VICK), 166 to 272 (LRPL…VSCV), 293 to 393 (MRLK…VICN), and 403 to 511 (MRLT…VICS). Cystine bridges form between C64–C128, C77–C138, C108–C118, C196–C261, C209–C271, C238–C248, C318–C382, C331–C392, C362–C372, C433–C497, C446–C510, and C479–C489. N256 is a glycosylation site (N-linked (GlcNAc...) asparagine). An N-linked (GlcNAc...) asparagine glycan is attached at N468. N-linked (GlcNAc...) asparagine glycosylation occurs at N611. The segment at residues 620-656 (KASFCLEDTECHEGVSKRYECANFGEQGITVGCWDLY) is a cross-link (lysine tyrosylquinone (Lys-Tyr)). Y656 is subject to 2',4',5'-topaquinone.

This sequence belongs to the lysyl oxidase family. Cu cation serves as cofactor. Lysine tyrosylquinone residue is required as a cofactor. In terms of processing, the lysine tyrosylquinone cross-link (LTQ) is generated by condensation of the epsilon-amino group of a lysine with a topaquinone produced by oxidation of tyrosine.

It is found in the secreted. The protein localises to the extracellular space. Its subcellular location is the cytoplasm. The protein resides in the nucleus. It carries out the reaction L-lysyl-[protein] + O2 + H2O = (S)-2-amino-6-oxohexanoyl-[protein] + H2O2 + NH4(+). The catalysed reaction is N(6)-acetyl-L-lysyl-[protein] + O2 + H2O = acetamide + (S)-2-amino-6-oxohexanoyl-[protein] + H2O2. Its function is as follows. Protein-lysine 6-oxidase that mediates the oxidation of peptidyl lysine residues to allysine in target proteins. Catalyzes the post-translational oxidative deamination of peptidyl lysine residues in precursors of elastin and different types of collagens, a prerequisite in the formation of cross-links between collagens and elastin. Can mediate oxidation of lysine residues that are acetylated. Also able to catalyze deacetylation of lysine residues. The protein is Lysyl oxidase homolog 3A of Danio rerio (Zebrafish).